Here is a 113-residue protein sequence, read N- to C-terminus: Fruiting body-specific class I hydrophobin fbh1 (113 aa).

The first 20 residues, 1 to 20 (MFSIRIATVVLAASALLAAA), serve as a signal peptide directing secretion. Disulfide bonds link Cys-33/Cys-92, Cys-40/Cys-86, Cys-41/Cys-73, and Cys-93/Cys-106.

Belongs to the fungal hydrophobin family. In terms of assembly, self-assembles to form functional amyloid fibrils called rodlets. Self-assembly into fibrillar rodlets occurs spontaneously at hydrophobic:hydrophilic interfaces and the rodlets further associate laterally to form amphipathic monolayers.

It localises to the secreted. It is found in the cell wall. Aerial growth, conidiation, and dispersal of filamentous fungi in the environment rely upon a capability of their secreting small amphipathic proteins called hydrophobins (HPBs) with low sequence identity. Class I can self-assemble into an outermost layer of rodlet bundles on aerial cell surfaces, conferring cellular hydrophobicity that supports fungal growth, development and dispersal; whereas Class II form highly ordered films at water-air interfaces through intermolecular interactions but contribute nothing to the rodlet structure. Fbh1 is a fruiting body-specific class I hydrophobin that is involved in the growth rate and primordia formation. The chain is Fruiting body-specific class I hydrophobin fbh1 from Pleurotus ostreatus (strain PC15) (Oyster mushroom).